Reading from the N-terminus, the 316-residue chain is Transcription initiation factor IIB (316 aa).

The TFIIB-type zinc-finger motif lies at 7–38 (FRLRCPVCGSTDIVFNEETGEYVCARCGTIVL). Residues cysteine 11, cysteine 14, cysteine 30, and cysteine 33 each contribute to the Zn(2+) site. The tract at residues 51-73 (FTPEERERRGRTGAPLSPTLHDH) is disordered. 2 tandem repeats follow at residues 124-207 (NELD…TKEL) and 218-299 (DHIP…EIMK).

Belongs to the TFIIB family.

Its function is as follows. Stabilizes TBP binding to an archaeal box-A promoter. Also responsible for recruiting RNA polymerase II to the pre-initiation complex (DNA-TBP-TFIIB). In Ignicoccus hospitalis (strain KIN4/I / DSM 18386 / JCM 14125), this protein is Transcription initiation factor IIB.